We begin with the raw amino-acid sequence, 316 residues long: Ninja-family protein 2 (316 aa).

2 disordered regions span residues 1-29 (MASR…GEPD) and 72-236 (TSDD…TSTG). The span at 99–108 (ERWRRREMQS) shows a compositional bias: basic and acidic residues. The segment covering 156–166 (DQGNTSSSMPE) has biased composition (polar residues). Low complexity-rich tracts occupy residues 179-199 (SSME…QNKS) and 222-235 (LRTL…TTST).

It belongs to the Ninja family.

It is found in the nucleus. In Triticum aestivum (Wheat), this protein is Ninja-family protein 2 (AFP-B1).